Reading from the N-terminus, the 178-residue chain is MEHKDDDDDDVSFAKWMSSFWGHSWREEDQRGLRERHRLQATSHRKTSLPCPLPVLPRIPSSDCHPRRHSHEDQEFRCRSHVRDYRKYSEDGSFKEPLESKGRSHSKIEKFSESFERQLCFRTKRSASLGPESRKERNERECLRMEIKSRKKVEEERSSRKEEHGEAHMAPLFEKGPE.

3 disordered regions span residues 28–55, 89–108, and 147–178; these read EDQRGLRERHRLQATSHRKTSLPCPLPV, SEDGSFKEPLESKGRSHSKI, and IKSRKKVEEERSSRKEEHGEAHMAPLFEKGPE. Residues 34–47 show a composition bias toward basic residues; the sequence is RERHRLQATSHRKT. Over residues 147–167 the composition is skewed to basic and acidic residues; sequence IKSRKKVEEERSSRKEEHGEA.

This chain is Leukemia NUP98 fusion partner 1 (LNP1), found in Homo sapiens (Human).